A 348-amino-acid chain; its full sequence is tRNA pseudouridine synthase D (348 aa).

The Nucleophile role is filled by aspartate 78. The TRUD domain occupies 150 to 304 (GLPNFFGPQR…AEGTRRAARL (155 aa)).

This sequence belongs to the pseudouridine synthase TruD family.

The catalysed reaction is uridine(13) in tRNA = pseudouridine(13) in tRNA. Its function is as follows. Responsible for synthesis of pseudouridine from uracil-13 in transfer RNAs. This Anaeromyxobacter dehalogenans (strain 2CP-1 / ATCC BAA-258) protein is tRNA pseudouridine synthase D.